A 310-amino-acid polypeptide reads, in one-letter code: Translocator protein BipD (310 aa).

Coiled-coil stretches lie at residues D127–Y171 and D250–T299.

It belongs to the invasin protein D family.

It is found in the secreted. Its function is as follows. Required for invasion of epithelial cells, as well as for survival within host cells, escape from endocytic vesicles and subsequent actin-tail formation. Probably regulates the secretion of effectors BipB and BipC and their final integration into the target cell membrane. In Burkholderia pseudomallei (strain 1106a), this protein is Translocator protein BipD (bipD).